A 144-amino-acid chain; its full sequence is Gas vesicle protein A1 (144 aa).

Residues 72–144 (EAGPRKDPGL…APSRRKEEQE (73 aa)) are disordered. Positions 113–127 (KQARDDGGSERETSS) are enriched in basic and acidic residues.

Belongs to the gas vesicle GvpA family. The gas vesicle shell is 2 nm thick and consists of a single layer of this protein. It forms helical ribs nearly perpendicular to the long axis of the vesicle.

It is found in the gas vesicle shell. Its function is as follows. Gas vesicles are hollow, gas filled proteinaceous nanostructures found in some microorganisms. During planktonic growth they allow positioning of the organism at a favorable depth for light or nutrient acquisition. GvpA forms the protein shell. It is not clear what function GVs perform in soil bacteria. In Streptomyces coelicolor (strain ATCC BAA-471 / A3(2) / M145), this protein is Gas vesicle protein A1.